The chain runs to 393 residues: Probable acetyl-CoA acetyltransferase (393 aa).

A propeptide (removed; alternate) is located at residue Thr2. Cys88 serves as the catalytic Acyl-thioester intermediate. Catalysis depends on proton acceptor residues His349 and Cys379.

The protein belongs to the thiolase-like superfamily. Thiolase family.

It carries out the reaction 2 acetyl-CoA = acetoacetyl-CoA + CoA. In Mycobacterium tuberculosis (strain ATCC 25618 / H37Rv), this protein is Probable acetyl-CoA acetyltransferase (fadA4).